Reading from the N-terminus, the 206-residue chain is Protein Mabiki (206 aa).

The segment at 54 to 77 is disordered; that stretch reads FSDQDADFPPLPKRRRLGSSSSSV.

Plays a role in inducing apoptosis and is involved in the repair of head patterning defects in the embryo caused by extra maternal copies of the homeotic gene bicoid. This Drosophila melanogaster (Fruit fly) protein is Protein Mabiki.